Reading from the N-terminus, the 197-residue chain is Ribose 1,5-bisphosphate phosphokinase PhnN (197 aa).

21 to 28 (GPSGAGKD) contacts ATP.

The protein belongs to the ribose 1,5-bisphosphokinase family.

The catalysed reaction is alpha-D-ribose 1,5-bisphosphate + ATP = 5-phospho-alpha-D-ribose 1-diphosphate + ADP. It participates in metabolic intermediate biosynthesis; 5-phospho-alpha-D-ribose 1-diphosphate biosynthesis; 5-phospho-alpha-D-ribose 1-diphosphate from D-ribose 5-phosphate (route II): step 3/3. In terms of biological role, catalyzes the phosphorylation of ribose 1,5-bisphosphate to 5-phospho-D-ribosyl alpha-1-diphosphate (PRPP). The sequence is that of Ribose 1,5-bisphosphate phosphokinase PhnN from Rhizobium etli (strain CIAT 652).